Here is a 596-residue protein sequence, read N- to C-terminus: ATP-dependent lipid A-core flippase (596 aa).

6 helical membrane-spanning segments follow: residues 34–54 (VWVLVAGVLAMAAVAATEAGI), 80–100 (AAVVGLALARAIAQYASGYLL), 138–158 (AVVFEVNQVLSVLMGVMITLV), 164–184 (VVFLLGYLFYLNWRLTLIVAI), 263–283 (QPLTQFLASIALAVVLTIAVV), and 292–312 (VGGFVAFVTAMLLIISPLKHL). An ABC transmembrane type-1 domain is found at 38–321 (VAGVLAMAAV…LMDVNQPLQR (284 aa)). The 237-residue stretch at 353–589 (IEFSHVSFSY…GGLYAHLHRI (237 aa)) folds into the ABC transporter domain. 389–396 (GPSGSGKT) serves as a coordination point for ATP.

It belongs to the ABC transporter superfamily. Lipid exporter (TC 3.A.1.106) family. As to quaternary structure, homodimer.

It localises to the cell inner membrane. The catalysed reaction is ATP + H2O + lipid A-core oligosaccharideSide 1 = ADP + phosphate + lipid A-core oligosaccharideSide 2.. Functionally, involved in lipopolysaccharide (LPS) biosynthesis. Translocates lipid A-core from the inner to the outer leaflet of the inner membrane. Transmembrane domains (TMD) form a pore in the inner membrane and the ATP-binding domain (NBD) is responsible for energy generation. The polypeptide is ATP-dependent lipid A-core flippase (Burkholderia thailandensis (strain ATCC 700388 / DSM 13276 / CCUG 48851 / CIP 106301 / E264)).